The chain runs to 323 residues: Vertebrate ancient opsin (323 aa).

Residues Met-1 to Asn-38 lie on the Extracellular side of the membrane. A helical transmembrane segment spans residues Phe-39–Ala-63. At Thr-64–Asn-75 the chain is on the cytoplasmic side. A helical membrane pass occupies residues Tyr-76 to Asn-100. Over Ala-101–Glu-115 the chain is Extracellular. The cysteines at positions 112 and 189 are disulfide-linked. A helical membrane pass occupies residues Gly-116–Phe-135. The Cytoplasmic segment spans residues Glu-136 to His-154. The helical transmembrane segment at Ala-155–Cys-178 threads the bilayer. Residues Ser-179–Thr-202 lie on the Extracellular side of the membrane. Asn-200 carries N-linked (GlcNAc...) asparagine glycosylation. A helical transmembrane segment spans residues Tyr-203–Leu-230. Residues Arg-231 to Arg-250 lie on the Cytoplasmic side of the membrane. A helical membrane pass occupies residues Met-251–Thr-274. Topologically, residues Ala-275 to Asp-282 are extracellular. A helical transmembrane segment spans residues Pro-283–Met-307. Position 294 is an N6-(retinylidene)lysine (Lys-294). Residues Asn-308–Ala-323 are Cytoplasmic-facing.

Belongs to the G-protein coupled receptor 1 family. Opsin subfamily. In terms of processing, phosphorylated on some or all of the serine and threonine residues present in the C-terminal region.

The protein resides in the membrane. This chain is Vertebrate ancient opsin, found in Salmo salar (Atlantic salmon).